A 391-amino-acid polypeptide reads, in one-letter code: Succinate--CoA ligase [GDP-forming] subunit beta, mitochondrial (391 aa).

The ATP-grasp domain occupies 5–233 (KKIMADHGVT…NAEFRQKEIF (229 aa)). Residues Gln16, 49-51 (GRG), and Leu105 each bind GTP. Positions 202 and 216 each coordinate Mg(2+). Residues Asn267 and 324-326 (GIV) contribute to the substrate site.

Belongs to the succinate/malate CoA ligase beta subunit family. GTP-specific subunit beta subfamily. In terms of assembly, heterodimer of an alpha and a beta subunit. The beta subunit determines specificity for GTP. Mg(2+) serves as cofactor. Widely expressed. Not present in breast muscle.

Its subcellular location is the mitochondrion. The catalysed reaction is GTP + succinate + CoA = succinyl-CoA + GDP + phosphate. It functions in the pathway carbohydrate metabolism; tricarboxylic acid cycle; succinate from succinyl-CoA (ligase route): step 1/1. Its function is as follows. GTP-specific succinyl-CoA synthetase functions in the citric acid cycle (TCA), coupling the hydrolysis of succinyl-CoA to the synthesis of GTP and thus represents the only step of substrate-level phosphorylation in the TCA. The beta subunit provides nucleotide specificity of the enzyme and binds the substrate succinate, while the binding sites for coenzyme A and phosphate are found in the alpha subunit. This is Succinate--CoA ligase [GDP-forming] subunit beta, mitochondrial from Columba livia (Rock dove).